The primary structure comprises 121 residues: Group 1 truncated hemoglobin (121 aa).

Met-1 bears the N-acetylmethionine mark. Residue His-73 coordinates heme.

It belongs to the truncated hemoglobin family. Group I subfamily. As to quaternary structure, monomer. Heme is required as a cofactor.

This chain is Group 1 truncated hemoglobin, found in Tetrahymena pyriformis.